A 135-amino-acid chain; its full sequence is Hydroxylaminobenzene mutase HabA (135 aa).

Transmembrane regions (helical) follow at residues 5–25 (LFAS…LVPV), 33–55 (VAGH…LWPY), 67–87 (FWLL…AALW), and 113–133 (FLLF…LIGI).

It localises to the cell membrane. The enzyme catalyses N-phenylhydroxylamine = 2-aminophenol. In terms of biological role, catalyzes the rearrangement of hydroxylaminobenzene to 2-aminophenol. Involved in the degradation of nitrobenzene. This chain is Hydroxylaminobenzene mutase HabA (habA), found in Ectopseudomonas oleovorans (Pseudomonas oleovorans).